Here is a 447-residue protein sequence, read N- to C-terminus: Phosphoglucosamine mutase (447 aa).

The active-site Phosphoserine intermediate is the Ser101. 4 residues coordinate Mg(2+): Ser101, Asp242, Asp244, and Asp246. Phosphoserine is present on Ser101.

Belongs to the phosphohexose mutase family. Mg(2+) serves as cofactor. Activated by phosphorylation.

It carries out the reaction alpha-D-glucosamine 1-phosphate = D-glucosamine 6-phosphate. Its function is as follows. Catalyzes the conversion of glucosamine-6-phosphate to glucosamine-1-phosphate. This Azorhizobium caulinodans (strain ATCC 43989 / DSM 5975 / JCM 20966 / LMG 6465 / NBRC 14845 / NCIMB 13405 / ORS 571) protein is Phosphoglucosamine mutase.